The primary structure comprises 202 residues: Molybdenum cofactor guanylyltransferase (202 aa).

GTP-binding positions include 9 to 11 (LAG), Lys-22, Asp-70, and Asp-96. Asp-96 contributes to the Mg(2+) binding site.

This sequence belongs to the MobA family. As to quaternary structure, monomer. Mg(2+) serves as cofactor.

The protein localises to the cytoplasm. It catalyses the reaction Mo-molybdopterin + GTP + H(+) = Mo-molybdopterin guanine dinucleotide + diphosphate. Functionally, transfers a GMP moiety from GTP to Mo-molybdopterin (Mo-MPT) cofactor (Moco or molybdenum cofactor) to form Mo-molybdopterin guanine dinucleotide (Mo-MGD) cofactor. This is Molybdenum cofactor guanylyltransferase from Desulfosudis oleivorans (strain DSM 6200 / JCM 39069 / Hxd3) (Desulfococcus oleovorans).